Reading from the N-terminus, the 206-residue chain is Imidazoleglycerol-phosphate dehydratase (206 aa).

This sequence belongs to the imidazoleglycerol-phosphate dehydratase family.

The protein localises to the cytoplasm. The catalysed reaction is D-erythro-1-(imidazol-4-yl)glycerol 3-phosphate = 3-(imidazol-4-yl)-2-oxopropyl phosphate + H2O. The protein operates within amino-acid biosynthesis; L-histidine biosynthesis; L-histidine from 5-phospho-alpha-D-ribose 1-diphosphate: step 6/9. This is Imidazoleglycerol-phosphate dehydratase from Leptospira interrogans serogroup Icterohaemorrhagiae serovar copenhageni (strain Fiocruz L1-130).